The sequence spans 142 residues: Large ribosomal subunit protein uL13 (142 aa).

It belongs to the universal ribosomal protein uL13 family. As to quaternary structure, part of the 50S ribosomal subunit.

This protein is one of the early assembly proteins of the 50S ribosomal subunit, although it is not seen to bind rRNA by itself. It is important during the early stages of 50S assembly. The chain is Large ribosomal subunit protein uL13 from Pseudoalteromonas translucida (strain TAC 125).